We begin with the raw amino-acid sequence, 179 residues long: Large ribosomal subunit protein uL5 (179 aa).

It belongs to the universal ribosomal protein uL5 family. Part of the 50S ribosomal subunit; part of the 5S rRNA/L5/L18/L25 subcomplex. Contacts the 5S rRNA and the P site tRNA. Forms a bridge to the 30S subunit in the 70S ribosome.

Functionally, this is one of the proteins that bind and probably mediate the attachment of the 5S RNA into the large ribosomal subunit, where it forms part of the central protuberance. In the 70S ribosome it contacts protein S13 of the 30S subunit (bridge B1b), connecting the 2 subunits; this bridge is implicated in subunit movement. Contacts the P site tRNA; the 5S rRNA and some of its associated proteins might help stabilize positioning of ribosome-bound tRNAs. The protein is Large ribosomal subunit protein uL5 of Vibrio campbellii (strain ATCC BAA-1116).